A 612-amino-acid polypeptide reads, in one-letter code: Serine/threonine-protein kinase Nek1 (612 aa).

In terms of domain architecture, Protein kinase spans 4 to 258 (YEFLEQIGKG…ASDLLRHPHL (255 aa)). ATP contacts are provided by residues 10–18 (IGKGSFGSA) and K33. D129 acts as the Proton acceptor in catalysis. Over residues 503–513 (ISDGSSSSDQN) the composition is skewed to polar residues. Residues 503–534 (ISDGSSSSDQNATAGASSHTTSSSSRRCRFDP) form a disordered region. A compositionally biased stretch (low complexity) spans 514–527 (ATAGASSHTTSSSS).

It belongs to the protein kinase superfamily. NEK Ser/Thr protein kinase family. NIMA subfamily.

It catalyses the reaction L-seryl-[protein] + ATP = O-phospho-L-seryl-[protein] + ADP + H(+). The catalysed reaction is L-threonyl-[protein] + ATP = O-phospho-L-threonyl-[protein] + ADP + H(+). Functionally, may be involved in plant development processes. The sequence is that of Serine/threonine-protein kinase Nek1 (NEK1) from Arabidopsis thaliana (Mouse-ear cress).